An 84-amino-acid polypeptide reads, in one-letter code: Small ribosomal subunit protein bS16c (84 aa).

The protein belongs to the bacterial ribosomal protein bS16 family.

Its subcellular location is the plastid. It is found in the chloroplast. The polypeptide is Small ribosomal subunit protein bS16c (Anthoceros angustus (Hornwort)).